A 158-amino-acid polypeptide reads, in one-letter code: 3-hydroxyacyl-[acyl-carrier-protein] dehydratase FabZ (158 aa).

Residue H62 is part of the active site.

It belongs to the thioester dehydratase family. FabZ subfamily.

Its subcellular location is the cytoplasm. It catalyses the reaction a (3R)-hydroxyacyl-[ACP] = a (2E)-enoyl-[ACP] + H2O. In terms of biological role, involved in unsaturated fatty acids biosynthesis. Catalyzes the dehydration of short chain beta-hydroxyacyl-ACPs and long chain saturated and unsaturated beta-hydroxyacyl-ACPs. The protein is 3-hydroxyacyl-[acyl-carrier-protein] dehydratase FabZ of Novosphingobium aromaticivorans (strain ATCC 700278 / DSM 12444 / CCUG 56034 / CIP 105152 / NBRC 16084 / F199).